The sequence spans 312 residues: CD-NTase-associated protein 12 (312 aa).

Residues 5–127 enclose the TIR domain; it reads RLFIGSSSEE…FNGLTLARFD (123 aa).

This sequence in the C-terminal section; belongs to the bacterial STING family. Forms homodimers; in the presence of c-di-GMP forms filaments with an ordered array of parallel-stacked subunits.

It carries out the reaction NAD(+) + H2O = ADP-D-ribose + nicotinamide + H(+). Its activity is regulated as follows. NAD(+) hydrolase activity is strongly stimulated by c-di-GMP, weakly by 3'3'-cGAMP, very weakly by c-di-AMP but not at all by 2'3'-cGAMP. Self-association of TIR domains is required for NADase activity. Effector protein of a CBASS antiviral system with NAD(+) hydrolase activity. CBASS (cyclic oligonucleotide-based antiphage signaling system) provides immunity against bacteriophage. The CD-NTase protein synthesizes cyclic nucleotides in response to infection; these serve as specific second messenger signals. The signals activate a diverse range of effectors, leading to bacterial cell death and thus abortive phage infection. A type I-D CBASS(GG) system. Functionally, binds c-di-GMP, does not bind cUMP-AMP. Upon activation by c-di-GMP forms filaments which hydrolyze NAD(+); filament formation is required for enzyme activation. In Niabella drilacis (strain DSM 25811 / CCM 8410 / CCUG 62505 / LMG 26954 / E90), this protein is CD-NTase-associated protein 12.